The primary structure comprises 198 residues: Na(+)-translocating NADH-quinone reductase subunit E (198 aa).

A run of 6 helical transmembrane segments spans residues S11 to V31, F39 to V59, F77 to I97, G110 to V130, I140 to I160, and L176 to V196.

It belongs to the NqrDE/RnfAE family. As to quaternary structure, composed of six subunits; NqrA, NqrB, NqrC, NqrD, NqrE and NqrF.

It is found in the cell inner membrane. The enzyme catalyses a ubiquinone + n Na(+)(in) + NADH + H(+) = a ubiquinol + n Na(+)(out) + NAD(+). NQR complex catalyzes the reduction of ubiquinone-1 to ubiquinol by two successive reactions, coupled with the transport of Na(+) ions from the cytoplasm to the periplasm. NqrA to NqrE are probably involved in the second step, the conversion of ubisemiquinone to ubiquinol. The chain is Na(+)-translocating NADH-quinone reductase subunit E from Photobacterium profundum (strain SS9).